We begin with the raw amino-acid sequence, 1380 residues long: DNA-directed RNA polymerase subunit beta (1380 aa).

The protein belongs to the RNA polymerase beta chain family. In terms of assembly, the RNAP catalytic core consists of 2 alpha, 1 beta, 1 beta' and 1 omega subunit. When a sigma factor is associated with the core the holoenzyme is formed, which can initiate transcription.

The catalysed reaction is RNA(n) + a ribonucleoside 5'-triphosphate = RNA(n+1) + diphosphate. Functionally, DNA-dependent RNA polymerase catalyzes the transcription of DNA into RNA using the four ribonucleoside triphosphates as substrates. The chain is DNA-directed RNA polymerase subunit beta from Ehrlichia ruminantium (strain Gardel).